The following is a 424-amino-acid chain: Serine--tRNA ligase (424 aa).

Position 232-234 (232-234 (TAE)) interacts with L-serine. 263–265 (RKE) contacts ATP. Position 286 (glutamate 286) interacts with L-serine. 350–353 (EISS) is an ATP binding site. Serine 386 contributes to the L-serine binding site.

This sequence belongs to the class-II aminoacyl-tRNA synthetase family. Type-1 seryl-tRNA synthetase subfamily. In terms of assembly, homodimer. The tRNA molecule binds across the dimer.

Its subcellular location is the cytoplasm. The enzyme catalyses tRNA(Ser) + L-serine + ATP = L-seryl-tRNA(Ser) + AMP + diphosphate + H(+). The catalysed reaction is tRNA(Sec) + L-serine + ATP = L-seryl-tRNA(Sec) + AMP + diphosphate + H(+). It participates in aminoacyl-tRNA biosynthesis; selenocysteinyl-tRNA(Sec) biosynthesis; L-seryl-tRNA(Sec) from L-serine and tRNA(Sec): step 1/1. In terms of biological role, catalyzes the attachment of serine to tRNA(Ser). Is also able to aminoacylate tRNA(Sec) with serine, to form the misacylated tRNA L-seryl-tRNA(Sec), which will be further converted into selenocysteinyl-tRNA(Sec). This chain is Serine--tRNA ligase, found in Thermodesulfovibrio yellowstonii (strain ATCC 51303 / DSM 11347 / YP87).